The primary structure comprises 240 residues: Probable transcriptional regulatory protein MADE_1004275 (240 aa).

It belongs to the TACO1 family.

It is found in the cytoplasm. In Alteromonas mediterranea (strain DSM 17117 / CIP 110805 / LMG 28347 / Deep ecotype), this protein is Probable transcriptional regulatory protein MADE_1004275.